We begin with the raw amino-acid sequence, 507 residues long: Maturase K (507 aa).

This sequence belongs to the intron maturase 2 family. MatK subfamily.

The protein localises to the plastid. Its subcellular location is the chloroplast. Usually encoded in the trnK tRNA gene intron. Probably assists in splicing its own and other chloroplast group II introns. The sequence is that of Maturase K from Robinia pseudoacacia (Black locust).